Consider the following 213-residue polypeptide: Histone H1.2 (213 aa).

Over residues methionine 1–lysine 17 the composition is skewed to low complexity. The tract at residues methionine 1–serine 41 is disordered. Serine 2 bears the N-acetylserine; partial mark. Serine 2 bears the Phosphoserine mark. Residue lysine 17 is modified to N6-acetyllysine. The span at valine 20–alanine 35 shows a compositional bias: basic residues. 3 positions are modified to N6-(2-hydroxyisobutyryl)lysine: lysine 23, lysine 26, and lysine 27. Position 34 is an N6-(beta-hydroxybutyryl)lysine; alternate (lysine 34). At lysine 34 the chain carries N6-crotonyllysine; alternate. Lysine 34 bears the N6-methyllysine; alternate mark. The H15 domain occupies serine 36 to lysine 109. Lysine 46 bears the N6-(2-hydroxyisobutyryl)lysine mark. Position 52 is an N6-(beta-hydroxybutyryl)lysine; alternate (lysine 52). Lysine 52 is modified (N6-(2-hydroxyisobutyryl)lysine; alternate). A Citrulline modification is found at arginine 54. Lysine 63 is modified (N6-(2-hydroxyisobutyryl)lysine). Lysine 64 carries the post-translational modification N6-(beta-hydroxybutyryl)lysine; alternate. An N6-crotonyllysine; alternate modification is found at lysine 64. Lysine 64 is modified (N6-(2-hydroxyisobutyryl)lysine; alternate). N6-(2-hydroxyisobutyryl)lysine is present on residues lysine 75 and lysine 81. N6-(beta-hydroxybutyryl)lysine; alternate is present on residues lysine 85 and lysine 90. An N6-crotonyllysine; alternate mark is found at lysine 85, lysine 90, and lysine 97. An N6-(2-hydroxyisobutyryl)lysine; alternate mark is found at lysine 85, lysine 90, and lysine 97. The interval glutamine 95–lysine 213 is disordered. Residue lysine 97 is modified to N6-succinyllysine; alternate. Residue serine 104 is modified to Phosphoserine; by PKC. Lysine 106 carries the post-translational modification N6-(beta-hydroxybutyryl)lysine. Residues lysine 110, lysine 117, lysine 121, lysine 129, and lysine 136 each carry the N6-(2-hydroxyisobutyryl)lysine modification. The segment covering lysine 119 to lysine 140 has biased composition (basic residues). Threonine 146 carries the phosphothreonine modification. Lysine 148 is modified (N6-(2-hydroxyisobutyryl)lysine). The segment covering lysine 149–lysine 160 has biased composition (basic residues). Residues lysine 159 and lysine 168 each carry the N6-crotonyllysine; alternate modification. 2 positions are modified to N6-(2-hydroxyisobutyryl)lysine; alternate: lysine 159 and lysine 168. A compositionally biased stretch (basic residues) spans lysine 169 to alanine 186. Residue lysine 187 is modified to N6-methyllysine; by EHMT1 and EHMT2. Serine 188 is subject to ADP-ribosylserine. A compositionally biased stretch (basic residues) spans valine 193–lysine 213.

This sequence belongs to the histone H1/H5 family. H1 histones are progressively phosphorylated during the cell cycle, becoming maximally phosphorylated during late G2 phase and M phase, and being dephosphorylated sharply thereafter. In terms of processing, crotonylation (Kcr) is specifically present in male germ cells and marks testis-specific genes in post-meiotic cells, including X-linked genes that escape sex chromosome inactivation in haploid cells. Crotonylation marks active promoters and enhancers and confers resistance to transcriptional repressors. It is also associated with post-meiotically activated genes on autosomes. Post-translationally, ADP-ribosylated on Ser-188 in response to DNA damage. Citrullination at Arg-54 (H1R54ci) by PADI4 takes place within the DNA-binding site of H1 and results in its displacement from chromatin and global chromatin decondensation, thereby promoting pluripotency and stem cell maintenance.

The protein localises to the nucleus. It localises to the chromosome. Histone H1 protein binds to linker DNA between nucleosomes forming the macromolecular structure known as the chromatin fiber. Histones H1 are necessary for the condensation of nucleosome chains into higher-order structured fibers. Also acts as a regulator of individual gene transcription through chromatin remodeling, nucleosome spacing and DNA methylation. The protein is Histone H1.2 of Bos taurus (Bovine).